Here is a 92-residue protein sequence, read N- to C-terminus: Small ribosomal subunit protein uS19 (92 aa).

It belongs to the universal ribosomal protein uS19 family.

Protein S19 forms a complex with S13 that binds strongly to the 16S ribosomal RNA. The protein is Small ribosomal subunit protein uS19 of Methylobacterium radiotolerans (strain ATCC 27329 / DSM 1819 / JCM 2831 / NBRC 15690 / NCIMB 10815 / 0-1).